Here is a 503-residue protein sequence, read N- to C-terminus: Ribose import ATP-binding protein RbsA 1 (503 aa).

ABC transporter domains follow at residues 5–241 (IALE…VGRA) and 253–495 (IGQP…AGIE). 37-44 (GENGAGKS) is a binding site for ATP.

The protein belongs to the ABC transporter superfamily. Ribose importer (TC 3.A.1.2.1) family. In terms of assembly, the complex is composed of an ATP-binding protein (RbsA), two transmembrane proteins (RbsC) and a solute-binding protein (RbsB).

The protein localises to the cell inner membrane. It carries out the reaction D-ribose(out) + ATP + H2O = D-ribose(in) + ADP + phosphate + H(+). Functionally, part of the ABC transporter complex RbsABC involved in ribose import. Responsible for energy coupling to the transport system. The protein is Ribose import ATP-binding protein RbsA 1 of Rhizobium meliloti (strain 1021) (Ensifer meliloti).